The following is a 108-amino-acid chain: ATP-dependent Clp protease adapter protein ClpS (108 aa).

This sequence belongs to the ClpS family. As to quaternary structure, binds to the N-terminal domain of the chaperone ClpA.

Its function is as follows. Involved in the modulation of the specificity of the ClpAP-mediated ATP-dependent protein degradation. The polypeptide is ATP-dependent Clp protease adapter protein ClpS (Mycobacterium leprae (strain TN)).